The sequence spans 341 residues: Pyrophosphate--fructose 6-phosphate 1-phosphotransferase (341 aa).

G10 is a binding site for diphosphate. E103 provides a ligand contact to Mg(2+). Residues 125–127, R162, 169–171, E221, R265, and 271–274 each bind substrate; these read TID, MGR, and HVQR. The active-site Proton acceptor is the D127.

Belongs to the phosphofructokinase type A (PFKA) family. Mixed-substrate PFK group III subfamily. Homodimer or homotetramer. Mg(2+) is required as a cofactor.

Its subcellular location is the cytoplasm. The enzyme catalyses beta-D-fructose 6-phosphate + diphosphate = beta-D-fructose 1,6-bisphosphate + phosphate + H(+). It functions in the pathway carbohydrate degradation; glycolysis; D-glyceraldehyde 3-phosphate and glycerone phosphate from D-glucose: step 3/4. Non-allosteric. Functionally, catalyzes the phosphorylation of D-fructose 6-phosphate, the first committing step of glycolysis. Uses inorganic phosphate (PPi) as phosphoryl donor instead of ATP like common ATP-dependent phosphofructokinases (ATP-PFKs), which renders the reaction reversible, and can thus function both in glycolysis and gluconeogenesis. Consistently, PPi-PFK can replace the enzymes of both the forward (ATP-PFK) and reverse (fructose-bisphosphatase (FBPase)) reactions. This chain is Pyrophosphate--fructose 6-phosphate 1-phosphotransferase, found in Amycolatopsis mediterranei (strain S699) (Nocardia mediterranei).